A 94-amino-acid chain; its full sequence is UPF0337 protein NE2439 (94 aa).

The tract at residues 74–94 is disordered; that stretch reads KNVGEAVSSRQKSVKKRSLYT. Residues 85 to 94 are compositionally biased toward basic residues; the sequence is KSVKKRSLYT.

Belongs to the UPF0337 (CsbD) family.

The sequence is that of UPF0337 protein NE2439 from Nitrosomonas europaea (strain ATCC 19718 / CIP 103999 / KCTC 2705 / NBRC 14298).